The following is a 488-amino-acid chain: GTPase Der (488 aa).

The EngA-type G 1 domain occupies 3–166 (PVVALVGRPN…YALAPYAEAL (164 aa)). Residues 9–16 (GRPNVGKS), 56–60 (DTGGI), and 118–121 (NKVD) each bind GTP. Positions 168–191 (LNRDGDEDEDEEEREYSEEEAEAE) are disordered. The span at 172 to 189 (GDEDEDEEEREYSEEEAE) shows a compositional bias: acidic residues. The EngA-type G 2 domain occupies 200–373 (IKMAIIGKPN…SVQEAYDSAT (174 aa)). GTP-binding positions include 206–213 (GKPNVGKS), 253–257 (DTAGV), and 318–321 (NKWD). Residues 374–458 (RRVSTSMLTR…PIQIRFQDSA (85 aa)) enclose the KH-like domain.

Belongs to the TRAFAC class TrmE-Era-EngA-EngB-Septin-like GTPase superfamily. EngA (Der) GTPase family. As to quaternary structure, associates with the 50S ribosomal subunit.

GTPase that plays an essential role in the late steps of ribosome biogenesis. The sequence is that of GTPase Der from Shewanella sediminis (strain HAW-EB3).